We begin with the raw amino-acid sequence, 182 residues long: Biotin transporter BioY2 (182 aa).

5 helical membrane passes run 12 to 32 (IALGAAIIAVLSPLAIPIGIV), 54 to 74 (FFAILLYLLLGFIGIPVFTGG), 78 to 98 (IAVLFGPTGGFLLAFLVMGTL), 111 to 131 (IPAFIINIVGHLLMLVIGTLW), and 150 to 170 (PFVFVEIIKAILVTIFGLALI).

The protein belongs to the BioY family. In terms of assembly, in E.coli forms a stable energy-coupling factor (ECF) transporter complex composed of 2 membrane-embedded substrate-binding protein (S component), 2 ATP-binding proteins (A and A' components) and 2 transmembrane proteins (T component), probably with a stoichiometry of 2:1:1:2. May be able to interact with more than 1 S component at a time.

The protein resides in the cell membrane. Functionally, probably a biotin-binding protein that interacts with the energy-coupling factor (ECF) ABC-transporter complex. Unlike classic ABC transporters this ECF transporter provides the energy necessary to transport a number of different substrates. The substrates themselves are bound by transmembrane, not extracytoplasmic soluble proteins. The protein is Biotin transporter BioY2 (bioY2) of Lactococcus lactis subsp. cremoris (strain MG1363).